The following is a 122-amino-acid chain: Cytochrome c-556 (122 aa).

Residues methionine 11, cysteine 111, cysteine 114, and histidine 115 each contribute to the heme site. Heme c-binding residues include methionine 11, cysteine 111, cysteine 114, and histidine 115.

In terms of assembly, monomer. Post-translationally, binds 1 heme c group covalently per subunit.

Its function is as follows. Low-spin monoheme cytochrome c. This is Cytochrome c-556 from Agrobacterium tumefaciens (strain B2A).